The chain runs to 436 residues: Suppressor of cytokine signaling 4 (436 aa).

The segment at 1 to 25 (MAENNSKNVDVRPKTSRSRSADRKD) is disordered. The segment covering 9 to 25 (VDVRPKTSRSRSADRKD) has biased composition (basic and acidic residues). Residues 283–378 (CYWGVMDKYA…FFEPLLSTPL (96 aa)) form the SH2 domain. Residues 373 to 422 (LLSTPLIRTFPFSLQHICRTVICNCTTYDGIDALPIPSPMKLYLKEYHYK) form the SOCS box domain.

It participates in protein modification; protein ubiquitination. Functionally, SOCS family proteins form part of a classical negative feedback system that regulates cytokine signal transduction. Substrate-recognition component of a SCF-like ECS (Elongin BC-CUL2/5-SOCS-box protein) E3 ubiquitin-protein ligase complex which mediates the ubiquitination and subsequent proteasomal degradation of target proteins. Inhibits EGF signaling by mediating the degradation of the Tyr-phosphorylated EGF receptor/EGFR. The sequence is that of Suppressor of cytokine signaling 4 (Socs4) from Mus musculus (Mouse).